The primary structure comprises 946 residues: Probable leucine-rich repeat receptor-like protein kinase At5g49770 (946 aa).

An N-terminal signal peptide occupies residues 1–25 (MKMSSRIGLFKLLILLFFQIYSVYA). The Extracellular segment spans residues 26 to 561 (FTDGSDFTAL…LEDSKTVSMK (536 aa)). 14 LRR repeats span residues 67-91 (DNRVVSISLTNRNLKGKLPTEISTL), 92-116 (SELQTLDLTGNPELSGPLPANIGNL), 118-140 (KLTFLSLMGCAFNGPIPDSIGNL), 141-164 (EQLTRLSLNLNKFSGTIPASMGRL), 166-191 (KLYWFDIADNQLEGKLPVSDGASLPG), 195-219 (LLQTGHFHFGNNKLSGEIPEKLFSS), 221-244 (MTLLHVLFDGNQFTGSIPESLGLV), 245-268 (QNLTVLRLDRNRLSGDIPSSLNNL), 269-293 (TNLQELHLSDNKFTGSLPNLTSLTS), 295-314 (YTLDVSNNPLALSPVPSWIP), 316-340 (LNSLSTLRLEDIQLDGPVPTSLFSP), 342-365 (QLQTVSLKHNLINTTLDLGTNYSK), 367-387 (LDFVDLRDNFITGYKSPANNP), and 389-407 (NVMLADNQVCQDPANQLSG). N-linked (GlcNAc...) asparagine glycans are attached at residues Asn-246, Asn-267, and Asn-287. N-linked (GlcNAc...) asparagine glycans are attached at residues Asn-354 and Asn-362. Residues Asn-415, Asn-460, Asn-489, and Asn-514 are each glycosylated (N-linked (GlcNAc...) asparagine). Residues 562 to 582 (VIIGVVVGVVVLLLLLALAGI) traverse the membrane as a helical segment. The Cytoplasmic segment spans residues 583-946 (YALRQKKRAQ…YTGVFPTPKP (364 aa)). Positions 634–908 (FSDANDVGGG…EVVQELESIL (275 aa)) constitute a Protein kinase domain. ATP is bound by residues 640–648 (VGGGGYGQV) and Lys-662. The Proton acceptor role is filled by Asp-758. Residues 919 to 946 (SATYEEASGDPYGRDSFEYTGVFPTPKP) form a disordered region.

The protein belongs to the protein kinase superfamily. Ser/Thr protein kinase family.

The protein localises to the membrane. It catalyses the reaction L-seryl-[protein] + ATP = O-phospho-L-seryl-[protein] + ADP + H(+). The catalysed reaction is L-threonyl-[protein] + ATP = O-phospho-L-threonyl-[protein] + ADP + H(+). This is Probable leucine-rich repeat receptor-like protein kinase At5g49770 from Arabidopsis thaliana (Mouse-ear cress).